Here is a 214-residue protein sequence, read N- to C-terminus: Putative 3-methyladenine DNA glycosylase (214 aa).

The protein belongs to the DNA glycosylase MPG family.

In Gloeobacter violaceus (strain ATCC 29082 / PCC 7421), this protein is Putative 3-methyladenine DNA glycosylase.